Reading from the N-terminus, the 486-residue chain is Betaine aldehyde dehydrogenase (486 aa).

Thr-23 and Asp-90 together coordinate K(+). 147–149 (GAW) is a binding site for NAD(+). Lys-159 functions as the Charge relay system in the catalytic mechanism. NAD(+)-binding positions include 173-176 (KPSE) and 226-229 (ESGT). Residue Leu-241 coordinates K(+). Glu-247 serves as the catalytic Proton acceptor. Residues Gly-249, Cys-281, and Glu-382 each contribute to the NAD(+) site. The active-site Nucleophile is Cys-281. The residue at position 281 (Cys-281) is a Cysteine sulfenic acid (-SOH). K(+)-binding residues include Lys-452 and Gly-455. The Charge relay system role is filled by Glu-459.

It belongs to the aldehyde dehydrogenase family. In terms of assembly, dimer of dimers. The cofactor is K(+).

It catalyses the reaction betaine aldehyde + NAD(+) + H2O = glycine betaine + NADH + 2 H(+). The protein operates within amine and polyamine biosynthesis; betaine biosynthesis via choline pathway; betaine from betaine aldehyde: step 1/1. Involved in the biosynthesis of the osmoprotectant glycine betaine. Catalyzes the irreversible oxidation of betaine aldehyde to the corresponding acid. This Vibrio parahaemolyticus serotype O3:K6 (strain RIMD 2210633) protein is Betaine aldehyde dehydrogenase.